Reading from the N-terminus, the 447-residue chain is Argininosuccinate synthase (447 aa).

ATP contacts are provided by residues 17–25 (AFSGGLDTS) and A43. Residue Y99 participates in L-citrulline binding. Residues G129 and T131 each contribute to the ATP site. L-aspartate contacts are provided by T131, N135, and D136. N135 lines the L-citrulline pocket. D136 serves as a coordination point for ATP. L-citrulline contacts are provided by R139 and S192. D194 serves as a coordination point for ATP. Positions 201, 203, and 280 each coordinate L-citrulline.

The protein belongs to the argininosuccinate synthase family. Type 2 subfamily. Homotetramer.

It is found in the cytoplasm. The enzyme catalyses L-citrulline + L-aspartate + ATP = 2-(N(omega)-L-arginino)succinate + AMP + diphosphate + H(+). It participates in amino-acid biosynthesis; L-arginine biosynthesis; L-arginine from L-ornithine and carbamoyl phosphate: step 2/3. The protein is Argininosuccinate synthase of Salmonella schwarzengrund (strain CVM19633).